A 412-amino-acid chain; its full sequence is Multifunctional CCA protein (412 aa).

Positions 8 and 11 each coordinate ATP. 2 residues coordinate CTP: glycine 8 and arginine 11. Mg(2+) is bound by residues glutamate 21 and aspartate 23. 3 residues coordinate ATP: arginine 91, arginine 137, and arginine 140. 3 residues coordinate CTP: arginine 91, arginine 137, and arginine 140. The 102-residue stretch at 228–329 (CGIHTLMSLQ…WRLLQRLDVL (102 aa)) folds into the HD domain.

Belongs to the tRNA nucleotidyltransferase/poly(A) polymerase family. Bacterial CCA-adding enzyme type 1 subfamily. As to quaternary structure, monomer. Can also form homodimers and oligomers. Requires Mg(2+) as cofactor. It depends on Ni(2+) as a cofactor.

The enzyme catalyses a tRNA precursor + 2 CTP + ATP = a tRNA with a 3' CCA end + 3 diphosphate. It carries out the reaction a tRNA with a 3' CCA end + 2 CTP + ATP = a tRNA with a 3' CCACCA end + 3 diphosphate. Functionally, catalyzes the addition and repair of the essential 3'-terminal CCA sequence in tRNAs without using a nucleic acid template. Adds these three nucleotides in the order of C, C, and A to the tRNA nucleotide-73, using CTP and ATP as substrates and producing inorganic pyrophosphate. tRNA 3'-terminal CCA addition is required both for tRNA processing and repair. Also involved in tRNA surveillance by mediating tandem CCA addition to generate a CCACCA at the 3' terminus of unstable tRNAs. While stable tRNAs receive only 3'-terminal CCA, unstable tRNAs are marked with CCACCA and rapidly degraded. The sequence is that of Multifunctional CCA protein from Acinetobacter baumannii (strain SDF).